A 279-amino-acid polypeptide reads, in one-letter code: Diaminopimelate epimerase (279 aa).

Substrate is bound by residues Asn14 and Gln68. Cys77 (proton donor) is an active-site residue. Residues 78–79 (GN), Asn191, and 207–208 (ER) each bind substrate. Cys217 acts as the Proton acceptor in catalysis. 218-219 (GT) serves as a coordination point for substrate.

It belongs to the diaminopimelate epimerase family. Homodimer.

The protein localises to the cytoplasm. It catalyses the reaction (2S,6S)-2,6-diaminopimelate = meso-2,6-diaminopimelate. Its pathway is amino-acid biosynthesis; L-lysine biosynthesis via DAP pathway; DL-2,6-diaminopimelate from LL-2,6-diaminopimelate: step 1/1. Functionally, catalyzes the stereoinversion of LL-2,6-diaminopimelate (L,L-DAP) to meso-diaminopimelate (meso-DAP), a precursor of L-lysine. In Methanothrix thermoacetophila (strain DSM 6194 / JCM 14653 / NBRC 101360 / PT) (Methanosaeta thermophila), this protein is Diaminopimelate epimerase.